The sequence spans 274 residues: NADPH-dependent 7-cyano-7-deazaguanine reductase (274 aa).

V80 to S82 contributes to the substrate binding site. S82–K83 is an NADPH binding site. The Thioimide intermediate role is filled by C181. D188 acts as the Proton donor in catalysis. Residue H220–E221 participates in substrate binding. An NADPH-binding site is contributed by R249 to G250.

Belongs to the GTP cyclohydrolase I family. QueF type 2 subfamily. As to quaternary structure, homodimer.

The protein resides in the cytoplasm. The catalysed reaction is 7-aminomethyl-7-carbaguanine + 2 NADP(+) = 7-cyano-7-deazaguanine + 2 NADPH + 3 H(+). It functions in the pathway tRNA modification; tRNA-queuosine biosynthesis. Functionally, catalyzes the NADPH-dependent reduction of 7-cyano-7-deazaguanine (preQ0) to 7-aminomethyl-7-deazaguanine (preQ1). The sequence is that of NADPH-dependent 7-cyano-7-deazaguanine reductase from Burkholderia multivorans (strain ATCC 17616 / 249).